The sequence spans 519 residues: Circadian clock oscillator protein KaiC 1 (519 aa).

KaiC domains are found at residues 1–248 (MNLP…INIF) and 262–519 (ARIS…KTAE). ATP contacts are provided by G50, T51, G52, K53, T54, L55, S90, K225, L226, R227, T229, H231, T241, T291, G292, T293, G294, K295, T296, and L297. Residue T54 participates in Mg(2+) binding. Residue T296 coordinates Mg(2+). E319 contacts Mg(2+). W332 is an ATP binding site. S432 carries the phosphoserine; by autocatalysis modification. At T433 the chain carries Phosphothreonine; by autocatalysis. ATP contacts are provided by R452, K458, M459, R460, S462, H464, and K466.

Belongs to the KaiC family. As to quaternary structure, homohexamer; hexamerization is dependent on ATP-binding. Core component of the KaiABC complex, at least composed of a KaiC homohexamer, a KaiB dimer and two KaiA dimers. Interacts directly with SasA. Multimerizes, probably forming homohexamers, no interaction with KaiC2 or KaiC3 is seen. Interacts with KaiA. In another study interacts with itself, KaiB1, KaiB3 and KaiC3. Interacts with SasA (hik8). The cofactor is Mg(2+). Phosphorylated on serine and threonine residues by autocatalysis. Has a 4 step phosphorylation cycle; the autokinase acts first on Thr-433, then Ser-432. When Ser-432 is modified KaiC switches to an autophosphatase mode, acting first on phospho-Thr-433 then phospho-Ser-432.

The enzyme catalyses L-seryl-[protein] + ATP = O-phospho-L-seryl-[protein] + ADP + H(+). It carries out the reaction L-threonyl-[protein] + ATP = O-phospho-L-threonyl-[protein] + ADP + H(+). It catalyses the reaction ATP + H2O = ADP + phosphate + H(+). Its activity is regulated as follows. The interaction with KaiA enhances its phosphorylation status, while the interaction with KaiB decreases it. Its function is as follows. Component of the oscillator and circadian clock in this organism, enhances fitness in a rhythmic environment. Autophosphorylates in the presence of KaiA, no activity is seen in its absence. Central component of the KaiABC oscillator complex, which constitutes the main circadian regulator in cyanobacteria. Complex composition changes during the circadian cycle to control KaiC phosphorylation. KaiA stimulates KaiC autophosphorylation, while KaiB sequesters KaiA, leading to KaiC autodephosphorylation. Clock output pathways impact the RpaA transcriptional regulator. KaiC enhances the autophosphorylation activity of SasA, which then transfers its phosphate group to RpaA to activate it. KaiB and KaiC together enhance the phospho-RpaA dephosphatase activity of CikA. In terms of biological role, has a weak, temperature-independent ATPase activity; ATPase activity defines the circadian period. The phosphorylation state of KaiC modulates its ATPase activity and effects KaiB binding. The protein is Circadian clock oscillator protein KaiC 1 of Synechocystis sp. (strain ATCC 27184 / PCC 6803 / Kazusa).